The following is a 787-amino-acid chain: DNA ligase (787 aa).

NAD(+) is bound by residues 32-36 (DAEYD), 81-82 (SL), and E121. Residue K123 is the N6-AMP-lysine intermediate of the active site. The NAD(+) site is built by R144, E181, K297, and K321. Residues C415, C418, C445, and C451 each coordinate Zn(2+). The BRCT domain maps to 703 to 787 (VEGLPLAGQT…RLTELGVAVD (85 aa)).

This sequence belongs to the NAD-dependent DNA ligase family. LigA subfamily. Mg(2+) serves as cofactor. Requires Mn(2+) as cofactor.

The catalysed reaction is NAD(+) + (deoxyribonucleotide)n-3'-hydroxyl + 5'-phospho-(deoxyribonucleotide)m = (deoxyribonucleotide)n+m + AMP + beta-nicotinamide D-nucleotide.. Functionally, DNA ligase that catalyzes the formation of phosphodiester linkages between 5'-phosphoryl and 3'-hydroxyl groups in double-stranded DNA using NAD as a coenzyme and as the energy source for the reaction. It is essential for DNA replication and repair of damaged DNA. This is DNA ligase from Pseudomonas syringae pv. tomato (strain ATCC BAA-871 / DC3000).